We begin with the raw amino-acid sequence, 298 residues long: Mitochondrial 2-oxodicarboxylate carrier (298 aa).

3 Solcar repeats span residues H10 to F99, S106 to I195, and L204 to W293. Helical transmembrane passes span V16–V36, F69–V88, L112–V132, G166–F186, L204–N224, and L276–E296.

It belongs to the mitochondrial carrier (TC 2.A.29) family.

It is found in the mitochondrion inner membrane. It catalyses the reaction 2-oxoadipate(in) + 2-oxoglutarate(out) = 2-oxoadipate(out) + 2-oxoglutarate(in). It carries out the reaction hexanedioate(in) + 2-oxoglutarate(out) = hexanedioate(out) + 2-oxoglutarate(in). The catalysed reaction is L-2-aminoadipate(in) + 2-oxoglutarate(out) = L-2-aminoadipate(out) + 2-oxoglutarate(in). The enzyme catalyses glutarate(in) + 2-oxoglutarate(out) = glutarate(out) + 2-oxoglutarate(in). It catalyses the reaction 2-oxoheptanedioate(in) + 2-oxoglutarate(out) = 2-oxoheptanedioate(out) + 2-oxoglutarate(in). It carries out the reaction heptanedioate(in) + 2-oxoglutarate(out) = heptanedioate(out) + 2-oxoglutarate(in). The catalysed reaction is citrate(in) + 2-oxoglutarate(out) = citrate(out) + 2-oxoglutarate(in). In terms of biological role, transports dicarboxylates across the inner membranes of mitochondria by a counter-exchange mechanism. Can transport 2-oxoadipate (2-oxohexanedioate), 2-oxoglutarate, adipate (hexanedioate), glutarate, and to a lesser extent, pimelate (heptanedioate), 2-oxopimelate (2-oxoheptanedioate), 2-aminoadipate (2-aminohexanedioate), oxaloacetate, and citrate. Plays a central role in catabolism of lysine, hydroxylysine, and tryptophan, by transporting common metabolite intermediates (such as 2-oxoadipate) into the mitochondria, where it is converted into acetyl-CoA and can enter the citric acid (TCA) cycle. The chain is Mitochondrial 2-oxodicarboxylate carrier (Slc25a21) from Mus musculus (Mouse).